The primary structure comprises 485 residues: Glutamyl-tRNA(Gln) amidotransferase subunit A (485 aa).

Residues Lys-79 and Ser-154 each act as charge relay system in the active site. The Acyl-ester intermediate role is filled by Ser-178.

The protein belongs to the amidase family. GatA subfamily. Heterotrimer of A, B and C subunits.

It carries out the reaction L-glutamyl-tRNA(Gln) + L-glutamine + ATP + H2O = L-glutaminyl-tRNA(Gln) + L-glutamate + ADP + phosphate + H(+). Allows the formation of correctly charged Gln-tRNA(Gln) through the transamidation of misacylated Glu-tRNA(Gln) in organisms which lack glutaminyl-tRNA synthetase. The reaction takes place in the presence of glutamine and ATP through an activated gamma-phospho-Glu-tRNA(Gln). This chain is Glutamyl-tRNA(Gln) amidotransferase subunit A, found in Staphylococcus aureus (strain USA300 / TCH1516).